Here is a 223-residue protein sequence, read N- to C-terminus: Ribonuclease HII (223 aa).

The RNase H type-2 domain occupies 32-223; sequence LYIAGVDEVG…LKKRYRDYMS (192 aa). A divalent metal cation is bound by residues Asp-38, Glu-39, and Asp-130.

Belongs to the RNase HII family. Mn(2+) is required as a cofactor. The cofactor is Mg(2+).

The protein resides in the cytoplasm. The enzyme catalyses Endonucleolytic cleavage to 5'-phosphomonoester.. Functionally, endonuclease that specifically degrades the RNA of RNA-DNA hybrids. The protein is Ribonuclease HII of Bartonella henselae (strain ATCC 49882 / DSM 28221 / CCUG 30454 / Houston 1) (Rochalimaea henselae).